The following is a 194-amino-acid chain: uncharacterized protein (194 aa).

The N-terminal stretch at M1 to G24 is a signal peptide.

This is an uncharacterized protein from Archaeoglobus fulgidus (strain ATCC 49558 / DSM 4304 / JCM 9628 / NBRC 100126 / VC-16).